The primary structure comprises 576 residues: Threonine dehydratase, mitochondrial (576 aa).

Lys109 is subject to N6-(pyridoxal phosphate)lysine. ACT-like domains lie at 393 to 473 (VFML…DISD) and 495 to 566 (RIIS…DETD).

This sequence belongs to the serine/threonine dehydratase family. In terms of assembly, homotetramer. It depends on pyridoxal 5'-phosphate as a cofactor.

It localises to the mitochondrion. It catalyses the reaction L-threonine = 2-oxobutanoate + NH4(+). Its pathway is amino-acid biosynthesis; L-isoleucine biosynthesis; 2-oxobutanoate from L-threonine: step 1/1. Isoleucine allosterically inhibits while valine allosterically activates this enzyme. This chain is Threonine dehydratase, mitochondrial (ILV1), found in Saccharomyces cerevisiae (strain ATCC 204508 / S288c) (Baker's yeast).